The sequence spans 329 residues: Secretory carrier-associated membrane protein 2 (329 aa).

Residues 1–74 form a disordered region; it reads MSAFDTNPFA…PSVEPAQPTP (74 aa). Residues 1 to 153 are Cytoplasmic-facing; it reads MSAFDTNPFA…DYQRICKMLY (153 aa). Polar residues-rich tracts occupy residues 19–31 and 40–51; these read QDPSVTQLTNAPQ and FSETNAATTVPA. A helical transmembrane segment spans residues 154-174; it reads YLWMLHSVTLFLNLLACLAWF. Topologically, residues 175-181 are lumenal; that stretch reads TSDAANG. Residues 182–202 form a helical membrane-spanning segment; sequence TAFGLSILWFLIFTPCAFLCW. Residues 203–218 lie on the Cytoplasmic side of the membrane; it reads YRPIYKAFRSDNSFSF. The segment at 203-218 is interaction with SLC9A7; sequence YRPIYKAFRSDNSFSF. A helical membrane pass occupies residues 219–239; it reads FVFFFVFFCQIGIYFIQLIGL. Over 240–262 the chain is Lumenal; sequence PNLGTSGWLAALSTMKNGPLAVT. The chain crosses the membrane as a helical span at residues 263 to 283; sequence IIMMVVAGFFTLCAGLSLFLL. The Cytoplasmic portion of the chain corresponds to 284–329; it reads QRVHAFYRRTGASFQQAQEEFSQGIFSSRTFRGAASSAARGAFQGN. Phosphoserine occurs at positions 319 and 320.

Belongs to the SCAMP family. As to quaternary structure, interacts with SLC6A4 and SLC9A7. Interacts with SLC9A5; this interaction regulates SLC9A5 cell-surface targeting and SLC9A5 activity.

The protein localises to the golgi apparatus. It localises to the trans-Golgi network membrane. The protein resides in the recycling endosome membrane. Its function is as follows. Functions in post-Golgi recycling pathways. Acts as a recycling carrier to the cell surface. The chain is Secretory carrier-associated membrane protein 2 (Scamp2) from Mus musculus (Mouse).